The following is a 128-amino-acid chain: MDGGLCFDSWSDYLGLSSLISRGLQPRGEGENPSPRWNVSCPAPAEPLPSKEPEGRGYKGCGFCRSNKEAMSLYSSHRLRSLDGRVLCPVLRGYTCPLCGANGDWAHTMRYCPLRQLLRNPQSPRNGQ.

The tract at residues phenylalanine 7–glycine 23 is essential for its translational repressor activity. The disordered stretch occupies residues glycine 23–arginine 56. The Nanos-type zinc finger occupies glycine 60–leucine 114. Residues cysteine 61, cysteine 64, histidine 77, cysteine 88, cysteine 96, cysteine 99, histidine 107, and cysteine 112 each contribute to the Zn(2+) site. 2 consecutive short sequence motifs (C2HC) follow at residues cysteine 61 to cysteine 88 and cysteine 96 to cysteine 112.

The protein belongs to the nanos family. As to quaternary structure, interacts with ccnb1.

It is found in the cytoplasm. The protein resides in the perinuclear region. Acts as a translational repressor. Can mediate repression affecting different steps in the translation process: cap-driven, IRES-driven, polyadenylated RNAs or nonpolyadenylated RNAs. Essential for the development of primordial germ cells (PGCs) by ensuring their proper migration and survival. This is Nanos homolog 1 (nanos1) from Xenopus borealis (Kenyan clawed frog).